Consider the following 817-residue polypeptide: U3 small nucleolar RNA-associated protein 13 (817 aa).

WD repeat units follow at residues 59–100 (EDEQ…RSMK), 102–139 (SSPSYILDADSTSTLLAVGGTDGSIIVVDIENGYITHS), 142–187 (GHGG…HTLQ), 191–233 (SAVR…KCKL), 238–280 (PVNQ…VLKR), 386–425 (GHEDLLNSLDATEDGLWIATASKDNTAIVWRYNENSCKFD), 432–476 (GHSA…ASMD), 489–528 (AHEKDINALSVSPNDSIFATASYDKTCKIWNLENGELEAT), 531–572 (NHKR…KTLE), 573–614 (GHTN…KTLD), 616–654 (HNNRLWALSTMNDGDMIVSADADGVFQFWKDCTEQEIEE), and 664–705 (EQEQ…LGES).

Interacts with snoRNA U3. Interacts with MPP10. Component of the ribosomal small subunit (SSU) processome composed of at least 40 protein subunits and snoRNA U3.

Its subcellular location is the nucleus. The protein localises to the nucleolus. Its function is as follows. Involved in nucleolar processing of pre-18S ribosomal RNA. The polypeptide is U3 small nucleolar RNA-associated protein 13 (UTP13) (Saccharomyces cerevisiae (strain ATCC 204508 / S288c) (Baker's yeast)).